A 432-amino-acid polypeptide reads, in one-letter code: Glutamate-1-semialdehyde 2,1-aminomutase (432 aa).

Lysine 267 bears the N6-(pyridoxal phosphate)lysine mark.

The protein belongs to the class-III pyridoxal-phosphate-dependent aminotransferase family. HemL subfamily. Homodimer. The cofactor is pyridoxal 5'-phosphate.

Its subcellular location is the cytoplasm. It carries out the reaction (S)-4-amino-5-oxopentanoate = 5-aminolevulinate. Its pathway is porphyrin-containing compound metabolism; protoporphyrin-IX biosynthesis; 5-aminolevulinate from L-glutamyl-tRNA(Glu): step 2/2. This chain is Glutamate-1-semialdehyde 2,1-aminomutase, found in Rhodococcus erythropolis (strain PR4 / NBRC 100887).